A 259-amino-acid polypeptide reads, in one-letter code: Small ribosomal subunit protein eS4 (259 aa).

Positions 41–100 (LPLSLFLRNRLKYALNYTEAKKILTQRVVRVDGKVRTCHKFPTGFMDVVAIERTNEYFRM) constitute an S4 RNA-binding domain.

The protein belongs to the eukaryotic ribosomal protein eS4 family.

This is Small ribosomal subunit protein eS4 (rps-4) from Caenorhabditis elegans.